We begin with the raw amino-acid sequence, 447 residues long: Glutamate--tRNA ligase 1 (447 aa).

The short motif at 10–20 (PSPTGMLHVGN) is the 'HIGH' region element. Residues 240 to 244 (KISKR) carry the 'KMSKS' region motif. Lys243 provides a ligand contact to ATP.

Belongs to the class-I aminoacyl-tRNA synthetase family. Glutamate--tRNA ligase type 1 subfamily. In terms of assembly, monomer.

It localises to the cytoplasm. The enzyme catalyses tRNA(Glu) + L-glutamate + ATP = L-glutamyl-tRNA(Glu) + AMP + diphosphate. In terms of biological role, catalyzes the attachment of glutamate to tRNA(Glu) in a two-step reaction: glutamate is first activated by ATP to form Glu-AMP and then transferred to the acceptor end of tRNA(Glu). The sequence is that of Glutamate--tRNA ligase 1 from Rickettsia akari (strain Hartford).